Consider the following 152-residue polypeptide: Large ribosomal subunit protein bL9 (152 aa).

The protein belongs to the bacterial ribosomal protein bL9 family.

Its function is as follows. Binds to the 23S rRNA. The protein is Large ribosomal subunit protein bL9 of Pelagibacter ubique (strain HTCC1062).